We begin with the raw amino-acid sequence, 767 residues long: Dipeptidyl peptidase 4 (767 aa).

The Cytoplasmic segment spans residues 1 to 6 (MKTPWK). Residues 7–28 (VLLGLLGVAALVTIITVPVVLL) traverse the membrane as a helical; Signal-anchor for type II membrane protein segment. The Extracellular portion of the chain corresponds to 29 to 767 (NKDEAAADSR…HFLQQCFSLR (739 aa)). N-linked (GlcNAc...) asparagine glycans are attached at residues Asn83, Asn90, Asn148, Asn217, Asn227, and Asn319. Intrachain disulfides connect Cys326/Cys337, Cys383/Cys395, Cys445/Cys448, and Cys455/Cys473. Asn521 carries an N-linked (GlcNAc...) asparagine glycan. Residue Ser631 is the Charge relay system of the active site. A disulfide bridge connects residues Cys650 and Cys763. Asn686 carries N-linked (GlcNAc...) asparagine glycosylation. Active-site charge relay system residues include Asp709 and His741.

This sequence belongs to the peptidase S9B family. DPPIV subfamily. Monomer. Homodimer. Heterodimer with Seprase (FAP). Requires homodimerization for optimal dipeptidyl peptidase activity and T-cell costimulation. Found in a membrane raft complex, at least composed of BCL10, CARD11, DPP4 and IKBKB. Associates with collagen. Interacts with PTPRC; the interaction is enhanced in an interleukin-12-dependent manner in activated lymphocytes. Interacts (via extracellular domain) with ADA; does not inhibit its dipeptidyl peptidase activity. Interacts with CAV1 (via the N-terminus); the interaction is direct. Interacts (via cytoplasmic tail) with CARD11 (via PDZ domain); its homodimerization is necessary for interaction with CARD11. Interacts with IGF2R; the interaction is direct. Interacts with GPC3. Post-translationally, the soluble form (Dipeptidyl peptidase 4 soluble form also named SDPP) derives from the membrane form (Dipeptidyl peptidase 4 membrane form also named MDPP) by proteolytic processing. N- and O-Glycosylated. In terms of processing, phosphorylated. Mannose 6-phosphate residues in the carbohydrate moiety are necessary for interaction with IGF2R in activated T-cells. Mannose 6-phosphorylation is induced during T-cell activation. As to expression, expressed in bile ducts and other epithelial brush borders (small intestine, kidney, colon, pancreatic duct); acinar structures in salivary glands; endothelial structures and T cell areas in thymus, spleen and lymph node.

The protein localises to the secreted. Its subcellular location is the cell membrane. The protein resides in the apical cell membrane. It localises to the cell projection. It is found in the invadopodium membrane. The protein localises to the lamellipodium membrane. Its subcellular location is the cell junction. The protein resides in the membrane raft. It catalyses the reaction Release of an N-terminal dipeptide, Xaa-Yaa-|-Zaa-, from a polypeptide, preferentially when Yaa is Pro, provided Zaa is neither Pro nor hydroxyproline.. With respect to regulation, inhibited by GPC3 and diprotin A. In terms of biological role, cell surface glycoprotein receptor involved in the costimulatory signal essential for T-cell receptor (TCR)-mediated T-cell activation. Acts as a positive regulator of T-cell coactivation, by binding at least ADA, CAV1, IGF2R, and PTPRC. Its binding to CAV1 and CARD11 induces T-cell proliferation and NF-kappa-B activation in a T-cell receptor/CD3-dependent manner. Its interaction with ADA also regulates lymphocyte-epithelial cell adhesion. In association with FAP is involved in the pericellular proteolysis of the extracellular matrix (ECM), the migration and invasion of endothelial cells into the ECM. May be involved in the promotion of lymphatic endothelial cells adhesion, migration and tube formation. When overexpressed, enhanced cell proliferation, a process inhibited by GPC3. Also acts as a serine exopeptidase with a dipeptidyl peptidase activity that regulates various physiological processes by cleaving peptides in the circulation, including many chemokines, mitogenic growth factors, neuropeptides and peptide hormones. Removes N-terminal dipeptides sequentially from polypeptides having unsubstituted N-termini provided that the penultimate residue is proline. The sequence is that of Dipeptidyl peptidase 4 (Dpp4) from Rattus norvegicus (Rat).